The primary structure comprises 359 residues: Peptide chain release factor 1 (359 aa).

N5-methylglutamine is present on glutamine 236.

This sequence belongs to the prokaryotic/mitochondrial release factor family. Post-translationally, methylated by PrmC. Methylation increases the termination efficiency of RF1.

The protein localises to the cytoplasm. Functionally, peptide chain release factor 1 directs the termination of translation in response to the peptide chain termination codons UAG and UAA. The sequence is that of Peptide chain release factor 1 from Streptococcus pyogenes serotype M3 (strain ATCC BAA-595 / MGAS315).